A 134-amino-acid polypeptide reads, in one-letter code: Small ribosomal subunit protein uS11 (134 aa).

Residues 114–134 form a disordered region; it reads SISDVTPQPHNGCRPPKRRRV.

The protein belongs to the universal ribosomal protein uS11 family. As to quaternary structure, part of the 30S ribosomal subunit. Interacts with proteins S7 and S18. Binds to IF-3.

In terms of biological role, located on the platform of the 30S subunit, it bridges several disparate RNA helices of the 16S rRNA. Forms part of the Shine-Dalgarno cleft in the 70S ribosome. This Corynebacterium efficiens (strain DSM 44549 / YS-314 / AJ 12310 / JCM 11189 / NBRC 100395) protein is Small ribosomal subunit protein uS11.